The sequence spans 382 residues: Chaperone protein DnaJ (382 aa).

The J domain occupies 5–69 (DLYGVLGVAK…QKRANYDQSG (65 aa)). The interval 104–123 (QFFGGGGGQRNPNAPRPGRD) is disordered. Residues 138–220 (GKKTKIKYNR…CGGSGHEEER (83 aa)) form a CR-type zinc finger. 8 residues coordinate Zn(2+): cysteine 151, cysteine 154, cysteine 168, cysteine 171, cysteine 194, cysteine 197, cysteine 208, and cysteine 211. CXXCXGXG motif repeat units follow at residues 151-158 (CHTCGGNG), 168-175 (CHQCGGSG), 194-201 (CPVCHGTG), and 208-215 (CPTCGGSG). The interval 358-382 (ASGESVTGSGKGNLFNKMRDKFNEN) is disordered.

It belongs to the DnaJ family. In terms of assembly, homodimer. Zn(2+) is required as a cofactor.

It localises to the cytoplasm. Functionally, participates actively in the response to hyperosmotic and heat shock by preventing the aggregation of stress-denatured proteins and by disaggregating proteins, also in an autonomous, DnaK-independent fashion. Unfolded proteins bind initially to DnaJ; upon interaction with the DnaJ-bound protein, DnaK hydrolyzes its bound ATP, resulting in the formation of a stable complex. GrpE releases ADP from DnaK; ATP binding to DnaK triggers the release of the substrate protein, thus completing the reaction cycle. Several rounds of ATP-dependent interactions between DnaJ, DnaK and GrpE are required for fully efficient folding. Also involved, together with DnaK and GrpE, in the DNA replication of plasmids through activation of initiation proteins. The polypeptide is Chaperone protein DnaJ (Levilactobacillus brevis (strain ATCC 367 / BCRC 12310 / CIP 105137 / JCM 1170 / LMG 11437 / NCIMB 947 / NCTC 947) (Lactobacillus brevis)).